Here is a 615-residue protein sequence, read N- to C-terminus: Protein ENHANCED DISEASE RESISTANCE 4 (615 aa).

Disordered stretches follow at residues 46-271 (IAPS…DDDE), 292-336 (YKEQ…GRQG), and 549-592 (THDI…RGSP). Polar residues-rich tracts occupy residues 63 to 89 (NEPQSVPETNNVSSSSGQDTVLPSSPG) and 119 to 129 (GDGTNEIQEQE). The stretch at 104 to 129 (MESTEKELDDLELSNGDGTNEIQEQE) forms a coiled coil. Positions 134 to 148 (DSEKNEREDNSRLES) are enriched in basic and acidic residues. A compositionally biased stretch (low complexity) spans 159–168 (GSGSSSGSLS). Composition is skewed to polar residues over residues 296–314 (GASSSSPFSENRRNGITTY) and 552–564 (INANRNSNSTSES). Over residues 565-577 (PIDKAPSKPEKLR) the composition is skewed to basic and acidic residues.

As to quaternary structure, interacts with RLK902. Binds and recruits EDR1 at the powdery mildew (e.g. G.cichoracearum) penetration site on the plasma membrane. Interacts with CHC2. Expressed in stems and rosette leaves, and weakly in inflorescences. Not detected in roots.

It localises to the cell membrane. Its subcellular location is the endosome. In terms of biological role, plays a negative role in salicylic acid (SA)-mediated resistance to powdery mildew (e.g. Golovinomyces cichoracearum). May modulate plant immunity by regulating the relocation of EDR1 by interacting with CHC2 and modulating endocytosis. The chain is Protein ENHANCED DISEASE RESISTANCE 4 from Arabidopsis thaliana (Mouse-ear cress).